The primary structure comprises 124 residues: uncharacterized protein (124 aa).

It belongs to the asfivirus H124R family.

The protein resides in the virion. This is an uncharacterized protein from Ornithodoros (relapsing fever ticks).